A 274-amino-acid polypeptide reads, in one-letter code: NAD kinase (274 aa).

Residue D50 is the Proton acceptor of the active site. Residues 50-51 (DG), 126-127 (NE), R152, D154, 165-170 (TAYNKS), and A189 contribute to the NAD(+) site.

This sequence belongs to the NAD kinase family. The cofactor is a divalent metal cation.

The protein resides in the cytoplasm. The catalysed reaction is NAD(+) + ATP = ADP + NADP(+) + H(+). Functionally, involved in the regulation of the intracellular balance of NAD and NADP, and is a key enzyme in the biosynthesis of NADP. Catalyzes specifically the phosphorylation on 2'-hydroxyl of the adenosine moiety of NAD to yield NADP. The protein is NAD kinase of Streptococcus gordonii (strain Challis / ATCC 35105 / BCRC 15272 / CH1 / DL1 / V288).